A 430-amino-acid polypeptide reads, in one-letter code: Serine--tRNA ligase (430 aa).

237–239 (TAE) contributes to the L-serine binding site. Position 268-270 (268-270 (RSE)) interacts with ATP. Residue Glu-291 coordinates L-serine. Residue 355–358 (EISS) participates in ATP binding. An L-serine-binding site is contributed by Ser-391.

This sequence belongs to the class-II aminoacyl-tRNA synthetase family. Type-1 seryl-tRNA synthetase subfamily. As to quaternary structure, homodimer. The tRNA molecule binds across the dimer.

The protein resides in the cytoplasm. The catalysed reaction is tRNA(Ser) + L-serine + ATP = L-seryl-tRNA(Ser) + AMP + diphosphate + H(+). It carries out the reaction tRNA(Sec) + L-serine + ATP = L-seryl-tRNA(Sec) + AMP + diphosphate + H(+). Its pathway is aminoacyl-tRNA biosynthesis; selenocysteinyl-tRNA(Sec) biosynthesis; L-seryl-tRNA(Sec) from L-serine and tRNA(Sec): step 1/1. In terms of biological role, catalyzes the attachment of serine to tRNA(Ser). Is also able to aminoacylate tRNA(Sec) with serine, to form the misacylated tRNA L-seryl-tRNA(Sec), which will be further converted into selenocysteinyl-tRNA(Sec). The protein is Serine--tRNA ligase of Escherichia coli O139:H28 (strain E24377A / ETEC).